Here is a 112-residue protein sequence, read N- to C-terminus: Small ribosomal subunit protein bS6 (112 aa).

Belongs to the bacterial ribosomal protein bS6 family.

Its function is as follows. Binds together with bS18 to 16S ribosomal RNA. The protein is Small ribosomal subunit protein bS6 (rpsF) of Chlamydia pneumoniae (Chlamydophila pneumoniae).